Reading from the N-terminus, the 176-residue chain is Cytochrome c oxidase subunit 5b-1, mitochondrial (176 aa).

The N-terminal 55 residues, 1–55, are a transit peptide targeting the mitochondrion; it reads MWRRIVSSQLKTLAADVVAASPRRSIAATTRPVGFYLAANRSAISASSFVIPRRF. Positions 122, 146, and 149 each coordinate Zn(2+). A disordered region spans residues 157–176; it reads VVGPGGPPDGHGDEDDEHHH.

This sequence belongs to the cytochrome c oxidase subunit 5B (TC 3.D.4.11) family.

The protein localises to the mitochondrion inner membrane. This protein is one of the nuclear-coded polypeptide chains of cytochrome c oxidase, the terminal oxidase in mitochondrial electron transport. The chain is Cytochrome c oxidase subunit 5b-1, mitochondrial (COX5B-1) from Arabidopsis thaliana (Mouse-ear cress).